The following is a 226-amino-acid chain: ATP synthase F(0) complex subunit a (226 aa).

Transmembrane regions (helical) follow at residues 6 to 26 (FASF…IVLF), 68 to 88 (WALM…LGLL), 97 to 117 (QLSM…ITGF), 138 to 158 (IPML…ALAV), 164 to 184 (ITAG…LMSI), and 189 to 209 (ALIT…VAMI).

This sequence belongs to the ATPase A chain family. As to quaternary structure, component of the ATP synthase complex composed at least of ATP5F1A/subunit alpha, ATP5F1B/subunit beta, ATP5MC1/subunit c (homooctomer), MT-ATP6/subunit a, MT-ATP8/subunit 8, ATP5ME/subunit e, ATP5MF/subunit f, ATP5MG/subunit g, ATP5MK/subunit k, ATP5MJ/subunit j, ATP5F1C/subunit gamma, ATP5F1D/subunit delta, ATP5F1E/subunit epsilon, ATP5PF/subunit F6, ATP5PB/subunit b, ATP5PD/subunit d, ATP5PO/subunit OSCP. ATP synthase complex consists of a soluble F(1) head domain (subunits alpha(3) and beta(3)) - the catalytic core - and a membrane F(0) domain - the membrane proton channel (subunits c, a, 8, e, f, g, k and j). These two domains are linked by a central stalk (subunits gamma, delta, and epsilon) rotating inside the F1 region and a stationary peripheral stalk (subunits F6, b, d, and OSCP). Interacts with DNAJC30; interaction is direct.

The protein localises to the mitochondrion inner membrane. The catalysed reaction is H(+)(in) = H(+)(out). In terms of biological role, subunit a, of the mitochondrial membrane ATP synthase complex (F(1)F(0) ATP synthase or Complex V) that produces ATP from ADP in the presence of a proton gradient across the membrane which is generated by electron transport complexes of the respiratory chain. ATP synthase complex consist of a soluble F(1) head domain - the catalytic core - and a membrane F(1) domain - the membrane proton channel. These two domains are linked by a central stalk rotating inside the F(1) region and a stationary peripheral stalk. During catalysis, ATP synthesis in the catalytic domain of F(1) is coupled via a rotary mechanism of the central stalk subunits to proton translocation. With the subunit c (ATP5MC1), forms the proton-conducting channel in the F(0) domain, that contains two crucial half-channels (inlet and outlet) that facilitate proton movement from the mitochondrial intermembrane space (IMS) into the matrix. Protons are taken up via the inlet half-channel and released through the outlet half-channel, following a Grotthuss mechanism. This Ovis aries (Sheep) protein is ATP synthase F(0) complex subunit a.